The chain runs to 219 residues: Triosephosphate isomerase (219 aa).

Position 6–8 (6–8) interacts with substrate; that stretch reads NYK. The active-site Electrophile is His90. Glu138 serves as the catalytic Proton acceptor. Substrate contacts are provided by residues Ile143, Gly178, and 199–200; that span reads AS.

It belongs to the triosephosphate isomerase family. In terms of assembly, homotetramer; dimer of dimers.

The protein localises to the cytoplasm. The enzyme catalyses D-glyceraldehyde 3-phosphate = dihydroxyacetone phosphate. It functions in the pathway carbohydrate biosynthesis; gluconeogenesis. It participates in carbohydrate degradation; glycolysis; D-glyceraldehyde 3-phosphate from glycerone phosphate: step 1/1. In terms of biological role, involved in the gluconeogenesis. Catalyzes stereospecifically the conversion of dihydroxyacetone phosphate (DHAP) to D-glyceraldehyde-3-phosphate (G3P). The polypeptide is Triosephosphate isomerase (Methanocaldococcus jannaschii (strain ATCC 43067 / DSM 2661 / JAL-1 / JCM 10045 / NBRC 100440) (Methanococcus jannaschii)).